A 475-amino-acid chain; its full sequence is Argininosuccinate lyase (475 aa).

This sequence belongs to the lyase 1 family. Argininosuccinate lyase subfamily.

Its subcellular location is the cytoplasm. It carries out the reaction 2-(N(omega)-L-arginino)succinate = fumarate + L-arginine. Its pathway is amino-acid biosynthesis; L-arginine biosynthesis; L-arginine from L-ornithine and carbamoyl phosphate: step 3/3. The protein is Argininosuccinate lyase of Streptomyces griseus subsp. griseus (strain JCM 4626 / CBS 651.72 / NBRC 13350 / KCC S-0626 / ISP 5235).